The following is a 326-amino-acid chain: Beta-ketoacyl-[acyl-carrier-protein] synthase III (326 aa).

Active-site residues include Cys111 and His252. The interval 253–257 (QANIR) is ACP-binding. The active site involves Asn282.

The protein belongs to the thiolase-like superfamily. FabH family. Homodimer.

The protein localises to the plastid. Its subcellular location is the chloroplast. It catalyses the reaction malonyl-[ACP] + acetyl-CoA + H(+) = 3-oxobutanoyl-[ACP] + CO2 + CoA. It participates in lipid metabolism; fatty acid biosynthesis. Catalyzes the condensation reaction of fatty acid synthesis by the addition to an acyl acceptor of two carbons from malonyl-ACP. Catalyzes the first condensation reaction which initiates fatty acid synthesis and may therefore play a role in governing the total rate of fatty acid production. Possesses both acetoacetyl-ACP synthase and acetyl transacylase activities. Its substrate specificity determines the biosynthesis of branched-chain and/or straight-chain of fatty acids. This chain is Beta-ketoacyl-[acyl-carrier-protein] synthase III, found in Porphyra umbilicalis (Purple laver).